Reading from the N-terminus, the 343-residue chain is Hydroxycarboxylic acid receptor 1 (343 aa).

The Extracellular portion of the chain corresponds to 1–21 (MDNGSCCLIEGEPISQVMPPL). The N-linked (GlcNAc...) asparagine glycan is linked to Asn3. The chain crosses the membrane as a helical span at residues 22–42 (LILVFVLGALGNGIALCGFCF). The Cytoplasmic portion of the chain corresponds to 43–49 (HMKTWKS). Residues 50–70 (STIYLFNLAVADFLLMICLPL) traverse the membrane as a helical segment. The Extracellular segment spans residues 71 to 90 (RTDYYLRRRHWIFGDIACRL). Cys88 and Cys165 form a disulfide bridge. The helical transmembrane segment at 91–111 (VLFKLAMNRAGSIVFLTVVAV) threads the bilayer. The Cytoplasmic segment spans residues 112-131 (DRYFKVVHPHHMVNAISNRT). Residues 132-152 (AAATACVLWTLVILGTVYLLM) form a helical membrane-spanning segment. At 153-182 (ESHLCVQGTLSSCESFIMESANGWHDVMFQ) the chain is on the extracellular side. Residues 183–203 (LEFFLPLTIILFCSVNVVWSL) form a helical membrane-spanning segment. The Cytoplasmic segment spans residues 204-220 (RRRQQLTRQARMRRATR). The chain crosses the membrane as a helical span at residues 221-241 (FIMVVASVFITCYLPSVLARL). Residues 242-259 (YFLWTVPTSACDPSVHTA) lie on the Extracellular side of the membrane. The helical transmembrane segment at 260–280 (LHVTLSFTYLNSMLDPLVYYF) threads the bilayer. The Cytoplasmic segment spans residues 281–343 (SSPSLPKFYT…SDGQWDLQVC (63 aa)). A compositionally biased stretch (polar residues) spans 319–334 (CSKSSIDGANRSQRPS). Residues 319-343 (CSKSSIDGANRSQRPSDGQWDLQVC) form a disordered region.

It belongs to the G-protein coupled receptor 1 family. In terms of tissue distribution, highly expressed in subcutaneous fat and omental fat and detectable in lower levels in brain and many other tissues. High levels detected in epididymal and subcutaneous fat with slightly lower in omental fat, low levels are detected in the brain, skeletal muscle, kidney, liver and the pancreas (at protein level).

It is found in the cell membrane. Its function is as follows. Acts as a receptor for L-lactate and mediates its anti-lipolytic effect through a G(i)-protein-mediated pathway. The sequence is that of Hydroxycarboxylic acid receptor 1 (Hcar1) from Mus musculus (Mouse).